A 309-amino-acid chain; its full sequence is NADH-quinone oxidoreductase subunit C (309 aa).

A disordered region spans residues 198-309; sequence LPGDEKAVPP…RTRKKKEDGE (112 aa). The span at 220–230 shows a compositional bias: basic and acidic residues; the sequence is TKGDAKADVPK. Low complexity predominate over residues 246–261; the sequence is DAAAKPVAEAAAPAAT.

It belongs to the complex I 30 kDa subunit family. As to quaternary structure, NDH-1 is composed of 14 different subunits. Subunits NuoB, C, D, E, F, and G constitute the peripheral sector of the complex.

Its subcellular location is the cell inner membrane. The catalysed reaction is a quinone + NADH + 5 H(+)(in) = a quinol + NAD(+) + 4 H(+)(out). Its function is as follows. NDH-1 shuttles electrons from NADH, via FMN and iron-sulfur (Fe-S) centers, to quinones in the respiratory chain. The immediate electron acceptor for the enzyme in this species is believed to be ubiquinone. Couples the redox reaction to proton translocation (for every two electrons transferred, four hydrogen ions are translocated across the cytoplasmic membrane), and thus conserves the redox energy in a proton gradient. The sequence is that of NADH-quinone oxidoreductase subunit C from Novosphingobium aromaticivorans (strain ATCC 700278 / DSM 12444 / CCUG 56034 / CIP 105152 / NBRC 16084 / F199).